A 298-amino-acid chain; its full sequence is Cyclin-dependent kinase 2 homolog (298 aa).

In terms of domain architecture, Protein kinase spans 4–284; that stretch reads YHKMEKIGEG…AKEALKHDYF (281 aa). ATP is bound by residues 10-18 and Lys-32; that span reads IGEGTYGVV. At Thr-14 the chain carries Phosphothreonine. Tyr-15 is subject to Phosphotyrosine. Asp-125 serves as the catalytic Proton acceptor. Thr-158 is subject to Phosphothreonine.

It belongs to the protein kinase superfamily. CMGC Ser/Thr protein kinase family. CDC2/CDKX subfamily. May form a complex composed of at least the catalytic subunit CRK2 and a cyclin. Requires Mg(2+) as cofactor.

Its subcellular location is the cytoplasm. The enzyme catalyses L-seryl-[protein] + ATP = O-phospho-L-seryl-[protein] + ADP + H(+). It carries out the reaction L-threonyl-[protein] + ATP = O-phospho-L-threonyl-[protein] + ADP + H(+). The catalysed reaction is [DNA-directed RNA polymerase] + ATP = phospho-[DNA-directed RNA polymerase] + ADP + H(+). Its activity is regulated as follows. Phosphorylation at Thr-14 or Tyr-15 inactivates the enzyme, while phosphorylation at Thr-158 activates it. Functionally, serine/threonine-protein kinase. Involved in the control of the cell cycle. Required for entry into S-phase and mitosis. Probable component of the kinase complex that phosphorylates the repetitive C-terminus of RNA polymerase II. The chain is Cyclin-dependent kinase 2 homolog from Theileria parva (East coast fever infection agent).